The sequence spans 1593 residues: Laminin subunit gamma-1 (1593 aa).

Residues 1–19 (MSLFSCLLLWTLWAACSHG) form the signal peptide. One can recognise a Laminin N-terminal domain in the interval 30–269 (RPQRCMPEFV…AISDFAVGGR (240 aa)). Asn44 and Asn118 each carry an N-linked (GlcNAc...) asparagine glycan. Disulfide bonds link Cys270–Cys279, Cys272–Cys289, Cys291–Cys300, Cys303–Cys323, Cys326–Cys335, Cys328–Cys351, Cys354–Cys363, Cys366–Cys379, Cys382–Cys394, Cys384–Cys400, Cys402–Cys411, Cys414–Cys426, Cys429–Cys440, Cys431–Cys447, Cys449–Cys458, and Cys461–Cys476. 4 consecutive Laminin EGF-like domains span residues 270–325 (CKCN…ECLP), 326–381 (CNCN…RCLS), 382–428 (CGCN…GCRP), and 429–478 (CSCN…GCTP). Residues 505–673 (RDDEGWKGKQ…PGTPARWVEK (169 aa)) form the Laminin IV type A domain. 3 N-linked (GlcNAc...) asparagine glycosylation sites follow: Asn560, Asn634, and Asn654. Cystine bridges form between Cys708–Cys717, Cys710–Cys724, Cys726–Cys735, Cys738–Cys754, Cys757–Cys765, Cys759–Cys776, Cys779–Cys788, Cys791–Cys809, Cys812–Cys826, Cys814–Cys833, Cys836–Cys845, Cys848–Cys865, Cys868–Cys882, Cys870–Cys889, Cys891–Cys900, Cys903–Cys916, Cys919–Cys931, Cys921–Cys938, Cys940–Cys949, Cys952–Cys964, Cys967–Cys979, Cys969–Cys985, Cys987–Cys996, and Cys999–Cys1012. 6 Laminin EGF-like domains span residues 708-756 (CNCN…DCKA), 757-811 (CPCP…ACRA), 812-867 (CSCN…KCKP), 868-918 (CKCS…GCER), 919-966 (CNCN…GCKP), and 967-1014 (CDCD…GCQQ). Residues Asn1006, Asn1091, Asn1159, Asn1189, Asn1207, Asn1254, Asn1364, and Asn1379 are each glycosylated (N-linked (GlcNAc...) asparagine). The segment at 1014 to 1593 (QCPNCYSLVR…CFNTPSLERP (580 aa)) is domain II and I. The stretch at 1021 to 1580 (LVRDKVNQQR…ANLNDIKNTL (560 aa)) forms a coiled coil.

As to quaternary structure, laminin is a complex glycoprotein, consisting of three different polypeptide chains (alpha, beta, gamma), which are bound to each other by disulfide bonds into a cross-shaped molecule comprising one long and three short arms with globules at each end.

It localises to the secreted. The protein localises to the extracellular space. Its subcellular location is the extracellular matrix. It is found in the basement membrane. Its function is as follows. Binding to cells via a high affinity receptor, laminin is thought to mediate the attachment, migration and organization of cells into tissues during embryonic development by interacting with other extracellular matrix components. This Danio rerio (Zebrafish) protein is Laminin subunit gamma-1 (lamc1).